A 229-amino-acid polypeptide reads, in one-letter code: Putative N-acetylmannosamine-6-phosphate 2-epimerase (229 aa).

It belongs to the NanE family.

The catalysed reaction is an N-acyl-D-glucosamine 6-phosphate = an N-acyl-D-mannosamine 6-phosphate. Its pathway is amino-sugar metabolism; N-acetylneuraminate degradation; D-fructose 6-phosphate from N-acetylneuraminate: step 3/5. Converts N-acetylmannosamine-6-phosphate (ManNAc-6-P) to N-acetylglucosamine-6-phosphate (GlcNAc-6-P). The chain is Putative N-acetylmannosamine-6-phosphate 2-epimerase from Escherichia coli O8 (strain IAI1).